The sequence spans 262 residues: Ribose-5-phosphate isomerase A (262 aa).

Substrate is bound by residues 33-36, 89-92, and 102-105; these read TGST, DGAD, and KGGG. Glu111 (proton acceptor) is an active-site residue. Lys129 serves as a coordination point for substrate.

Belongs to the ribose 5-phosphate isomerase family. As to quaternary structure, homodimer.

The catalysed reaction is aldehydo-D-ribose 5-phosphate = D-ribulose 5-phosphate. It functions in the pathway carbohydrate degradation; pentose phosphate pathway; D-ribose 5-phosphate from D-ribulose 5-phosphate (non-oxidative stage): step 1/1. Catalyzes the reversible conversion of ribose-5-phosphate to ribulose 5-phosphate. The sequence is that of Ribose-5-phosphate isomerase A from Roseobacter denitrificans (strain ATCC 33942 / OCh 114) (Erythrobacter sp. (strain OCh 114)).